The primary structure comprises 437 residues: Serine hydroxymethyltransferase (437 aa).

(6S)-5,6,7,8-tetrahydrofolate contacts are provided by residues Leu130 and 134–136 (GHL). Lys239 bears the N6-(pyridoxal phosphate)lysine mark.

It belongs to the SHMT family. Homodimer. The cofactor is pyridoxal 5'-phosphate.

It is found in the cytoplasm. The catalysed reaction is (6R)-5,10-methylene-5,6,7,8-tetrahydrofolate + glycine + H2O = (6S)-5,6,7,8-tetrahydrofolate + L-serine. The protein operates within one-carbon metabolism; tetrahydrofolate interconversion. Its pathway is amino-acid biosynthesis; glycine biosynthesis; glycine from L-serine: step 1/1. In terms of biological role, catalyzes the reversible interconversion of serine and glycine with tetrahydrofolate (THF) serving as the one-carbon carrier. This reaction serves as the major source of one-carbon groups required for the biosynthesis of purines, thymidylate, methionine, and other important biomolecules. Also exhibits THF-independent aldolase activity toward beta-hydroxyamino acids, producing glycine and aldehydes, via a retro-aldol mechanism. This Bartonella tribocorum (strain CIP 105476 / IBS 506) protein is Serine hydroxymethyltransferase.